The primary structure comprises 155 residues: Aspartate carbamoyltransferase regulatory chain (155 aa).

Residues Cys-110, Cys-115, Cys-139, and Cys-142 each coordinate Zn(2+).

Belongs to the PyrI family. In terms of assembly, contains catalytic and regulatory chains. Zn(2+) serves as cofactor.

Its function is as follows. Involved in allosteric regulation of aspartate carbamoyltransferase. In Yersinia pseudotuberculosis serotype IB (strain PB1/+), this protein is Aspartate carbamoyltransferase regulatory chain.